We begin with the raw amino-acid sequence, 494 residues long: Serine carboxypeptidase-like 21 (494 aa).

Positions M1–S23 are cleaved as a signal peptide. N37 and N69 each carry an N-linked (GlcNAc...) asparagine glycan. 3 cysteine pairs are disulfide-bonded: C85-C383, C247-C263, and C286-C350. The active site involves S179. Residues N198 and N248 are each glycosylated (N-linked (GlcNAc...) asparagine). N402 carries an N-linked (GlcNAc...) asparagine glycan. D418 is a catalytic residue. N460 carries an N-linked (GlcNAc...) asparagine glycan. Residue H471 is part of the active site.

This sequence belongs to the peptidase S10 family. As to expression, expressed in flowers and siliques.

It localises to the secreted. Functionally, probable carboxypeptidase. The protein is Serine carboxypeptidase-like 21 (SCPL21) of Arabidopsis thaliana (Mouse-ear cress).